The chain runs to 236 residues: Small ribosomal subunit protein uS2c (236 aa).

The protein belongs to the universal ribosomal protein uS2 family.

Its subcellular location is the plastid. The protein resides in the chloroplast. The chain is Small ribosomal subunit protein uS2c (rps2) from Platanus occidentalis (Sycamore).